We begin with the raw amino-acid sequence, 249 residues long: Coproheme decarboxylase (249 aa).

Fe-coproporphyrin III is bound by residues arginine 131, 145-149, histidine 172, and glutamine 185; that span reads YPMDK. The active site involves tyrosine 145.

This sequence belongs to the ChdC family. Type 1 subfamily. Fe-coproporphyrin III serves as cofactor.

It carries out the reaction Fe-coproporphyrin III + 2 H2O2 + 2 H(+) = heme b + 2 CO2 + 4 H2O. The enzyme catalyses Fe-coproporphyrin III + H2O2 + H(+) = harderoheme III + CO2 + 2 H2O. The catalysed reaction is harderoheme III + H2O2 + H(+) = heme b + CO2 + 2 H2O. The protein operates within porphyrin-containing compound metabolism; protoheme biosynthesis. Involved in coproporphyrin-dependent heme b biosynthesis. Catalyzes the decarboxylation of Fe-coproporphyrin III (coproheme) to heme b (protoheme IX), the last step of the pathway. The reaction occurs in a stepwise manner with a three-propionate intermediate. The sequence is that of Coproheme decarboxylase from Staphylococcus epidermidis (strain ATCC 12228 / FDA PCI 1200).